The chain runs to 410 residues: D-amino acid dehydrogenase (410 aa).

Residue 9-14 coordinates FAD; sequence GGGIVG.

This sequence belongs to the DadA oxidoreductase family. FAD is required as a cofactor.

The protein localises to the cell inner membrane. It catalyses the reaction a D-alpha-amino acid + a quinone + H2O = a 2-oxocarboxylate + a quinol + NH4(+). Catalyzes the oxidative deamination of D-amino acids. Has broad substrate specificity; is mostly active on D-proline, and to a lesser extent, on several other D-amino acids such as D-alanine, D-phenylalanine and D-serine. Mediates electron transport from D-proline to coenzyme Q1 in vitro, and is involved in the electron transport chain from D-proline to the c-type cytochrome in vivo. This is D-amino acid dehydrogenase from Helicobacter pylori (strain J99 / ATCC 700824) (Campylobacter pylori J99).